Reading from the N-terminus, the 431-residue chain is MTKSAELFAKAQEKIPGGVNSPVRAFAGVGGSPIFIERADGPLIFDADGKAYIDYVGSWGPMILGHNHAAIREAVISAAQRGLSFGAPTETEINMAELVSELVPSMEQVRMVSSGTEATMSAIRLARGYTGRDKIMKFEGCYHGHADSLLVKAGSGALTLGQPSSPGVPADFAKYTLTATFNNLDSVRELFAANKGEISCIIVEPVAGNMNCIPPVEGFHEGLREICDAEGALLIFDEVMTGFRVAENCAQGYYNIKPDLTCLGKVIGGGMPVGAFGGRKDIMQYIAPTGPVYQAGTLSGNPVAMAAGFACLKVLTEEGNEKRLATTTKQLALGFKELANKHGLPMVVNYVGGMFGFFFTDQETITTYEDVTKCDIERFKRFFNLMLAHGVYLAPSAFEAGFTSLAHGPKEIEATLEAADRCFAKIAAESK.

An N6-(pyridoxal phosphate)lysine modification is found at Lys265.

Belongs to the class-III pyridoxal-phosphate-dependent aminotransferase family. HemL subfamily. As to quaternary structure, homodimer. It depends on pyridoxal 5'-phosphate as a cofactor.

It localises to the cytoplasm. The enzyme catalyses (S)-4-amino-5-oxopentanoate = 5-aminolevulinate. The protein operates within porphyrin-containing compound metabolism; protoporphyrin-IX biosynthesis; 5-aminolevulinate from L-glutamyl-tRNA(Glu): step 2/2. This is Glutamate-1-semialdehyde 2,1-aminomutase from Aliivibrio salmonicida (strain LFI1238) (Vibrio salmonicida (strain LFI1238)).